We begin with the raw amino-acid sequence, 650 residues long: MGKIIGIDLGTTNSCVAIMEGNQVKVIENSEGARTTPSIIAYMDDNEVLVGAPAKRQSVTNPKNTLFAVKRLIGRRFEEKEVQKDIGLMPYAIIKADNGDAWVEAHGEKLAPPQVSAEVLRKMKKTAEDYLGEPVTEAVITVPAYFNDSQRQATKDAGRIAGLEVKRIINEPTAAALAFGLDKAEKGDRKIAVYDLGGGTFDVSIIEIADVDGEMQFEVLSTNGDTFLGGEDFDQRIIDYIIGEFKKEQGVDLSKDVLALQRLKEAAEKAKIELSSSQQTEINLPYITADASGPKHLNLKVTRAKLEALVEDLVERTIEPCRTAIKDAGVKVSDIDDVILVGGQTRMPKVQEKVKEFFGKEPRRDVNPDEAVAVGAAIQGQVLSGDRKDVLLLDVTPLSLGIETLGGVMTKMINKNTTIPTKHAQVYSTADDNQGAVTIKVFQGEREMAAGNKLLGEFNLEGIPPAPRGVPQIEVTFDIDANGILHVGAKDKATGKENKITIKANSGLSEAEIEKMVKDAEANAAEDHKLRELAESRNQGDALVHSTKKALTEYGDKLEAGEKEKIEAALKELEDVLKNASSDKAAIDAKVEAVATASQKLGEKMYADMQAQQAGAAGAAGAAAEGASAQGGAQPADDVVDADFKEVKKD.

Threonine 200 bears the Phosphothreonine; by autocatalysis mark. The span at 611-636 (AQQAGAAGAAGAAAEGASAQGGAQPA) shows a compositional bias: low complexity. The segment at 611 to 650 (AQQAGAAGAAGAAAEGASAQGGAQPADDVVDADFKEVKKD) is disordered.

The protein belongs to the heat shock protein 70 family.

Functionally, acts as a chaperone. The polypeptide is Chaperone protein DnaK (Burkholderia mallei (strain NCTC 10247)).